The primary structure comprises 238 residues: Protein MIS12 homolog (238 aa).

Residues 117 to 149 adopt a coiled-coil conformation; the sequence is ELDAELDSLRDKLNVVGKRSVELDSELQALERS.

The protein belongs to the mis12 family.

It localises to the chromosome. The protein localises to the centromere. The protein resides in the kinetochore. Constitutive component of kinetochores that is essential for proper cell division during mitotic cell cycle. May play a role in the modulation of centromere during meiosis. This is Protein MIS12 homolog from Arabidopsis thaliana (Mouse-ear cress).